We begin with the raw amino-acid sequence, 390 residues long: uncharacterized protein (390 aa).

Transmembrane regions (helical) follow at residues 4–24 (IWLFFSVMFVIGTDTFLLSPL), 40–60 (GWMVSAYALGYALFAFIAGPI), 68–88 (TVMLWGLAGFIVSTFLCGIAP), 98–118 (FAAGVSAAFVTPQIWASIPVI), 130–150 (IATAGLAASQMLGLPIGGFLA), 159–179 (FVLSACSLILLLILAAVMPGI), 205–225 (VILLAYFLFQTGNFASFSFLG), 236–256 (VSQIGAAMLVLGLGNMLGSLI), 273–293 (GMLLMGALYFALPFFPNLFLV), 295–315 (AGFFLTFFTAGIIFPLMMGVF), 329–349 (LSNAAMYAGTTVGTSIAGFLY), and 356–376 (GAVTGFTAILFILSMTLYQTI).

It belongs to the major facilitator superfamily.

Its subcellular location is the cell membrane. This is an uncharacterized protein from Bacillus subtilis (strain 168).